The sequence spans 209 residues: Ribosomal RNA large subunit methyltransferase E (209 aa).

G63, W65, D83, D99, and D124 together coordinate S-adenosyl-L-methionine. Residue K164 is the Proton acceptor of the active site.

It belongs to the class I-like SAM-binding methyltransferase superfamily. RNA methyltransferase RlmE family.

The protein resides in the cytoplasm. It catalyses the reaction uridine(2552) in 23S rRNA + S-adenosyl-L-methionine = 2'-O-methyluridine(2552) in 23S rRNA + S-adenosyl-L-homocysteine + H(+). In terms of biological role, specifically methylates the uridine in position 2552 of 23S rRNA at the 2'-O position of the ribose in the fully assembled 50S ribosomal subunit. The protein is Ribosomal RNA large subunit methyltransferase E of Aeromonas salmonicida (strain A449).